We begin with the raw amino-acid sequence, 396 residues long: MSKLNAYFGEYGGQFVPQILVPALDQLEQEFIKAQADESFKQEFKELLQEYAGRPTALTKTRNIVKNTRTKLYLKREDLLHGGAHKTNQVLGQALLVKRMGKKEIIAETGAGQHGVATALACALLDLKCRVYMGAKDVERQSPNVFRMKLMGAEVIPVHSGSATLKDACNEALRDWSANYSKAHYLLGTAAGPHPFPTIVREFQRMIGEETKQQMLAKEGRLPDAVIACVGGGSNAIGMFADFIDEKNVKLIGVEPAGKGIETGEHGAPLKHGKTGIFFGMKAPLMQNSDGQIEESYSISAGLDFPSVGPQHAHLLAIGRAKYASATDDEALDAFKLLCKKEGIIPALESSHALAHALKLAYEDPNKEQLLVVNLSGRGDKDIFTVHDILKEKGEI.

N6-(pyridoxal phosphate)lysine is present on K86.

This sequence belongs to the TrpB family. As to quaternary structure, tetramer of two alpha and two beta chains. Pyridoxal 5'-phosphate serves as cofactor.

It carries out the reaction (1S,2R)-1-C-(indol-3-yl)glycerol 3-phosphate + L-serine = D-glyceraldehyde 3-phosphate + L-tryptophan + H2O. It functions in the pathway amino-acid biosynthesis; L-tryptophan biosynthesis; L-tryptophan from chorismate: step 5/5. The beta subunit is responsible for the synthesis of L-tryptophan from indole and L-serine. The polypeptide is Tryptophan synthase beta chain (Francisella tularensis subsp. holarctica (strain FTNF002-00 / FTA)).